The chain runs to 114 residues: MAQGKGFGFGLGKIKELQEAFQKAQQVQEGAKVLQEELERMEIPGKSADGLVTVLMSGNQEPLSIEIDPSALEKGAEGLSASVTEAMKAAYAESTETMRSKMEELTSGLNLPGM.

Belongs to the YbaB/EbfC family. As to quaternary structure, homodimer.

The protein resides in the cytoplasm. The protein localises to the nucleoid. Its function is as follows. Binds to DNA and alters its conformation. May be involved in regulation of gene expression, nucleoid organization and DNA protection. This chain is Nucleoid-associated protein slr1847, found in Synechocystis sp. (strain ATCC 27184 / PCC 6803 / Kazusa).